The chain runs to 582 residues: MAARSWQDELAQQAEEGSARLREMLSVGLGFLRTELGLDLGLEPKRYPGWVILVGTGALGLLLLFLLGYGWAAACAGARKKRRSPPRKREEAAAVPAAAPDDLALLKNLRSEEQKKKNRKKLSEKPKPNGRTVEVAEGEAVRTPQSVTAKQPPEIDKKNEKSKKNKKKSKSDAKAVQNSSRHDGKEVDEGAWETKISHREKRQQRKRDKVLTDSGSLDSTIPGIENTITVTTEQLTTASFPVGSKKNKGDSHLNVQVSNFKSGKGDSTLQVSSGLNENLTVNGGGWNEKSVKLSSQISAGEEKWNSVSPASAGKRKTEPSAWSQDTGDANTNGKDWGRSWSDRSIFSGIGSTAEPVSQSTTSDYQWDVSRNQPYIDDEWSGLNGLSSADPNSDWNAPAEEWGNWVDEERASLLKSQEPIPDDQKVSDDDKEKGEGALPTGKSKKKKKKKKKQGEDNSTAQDTEELEKEIREDLPVNTSKTRPKQEKAFSLKTISTSDPAEVLVKNSQPIKTLPPATSTEPSVILSKSDSDKSSSQVPPILQETDKSKSNTKQNSVPPSQTKSETSWESPKQIKKKKKARRET.

Residues 1–48 (MAARSWQDELAQQAEEGSARLREMLSVGLGFLRTELGLDLGLEPKRYP) are Lumenal-facing. The segment at 1 to 71 (MAARSWQDEL…LLLFLLGYGW (71 aa)) is activation of NF-kappa-B. Residues 49–69 (GWVILVGTGALGLLLLFLLGY) traverse the membrane as a helical segment. The Cytoplasmic portion of the chain corresponds to 70–582 (GWAAACAGAR…KKKKKARRET (513 aa)). Residues 72 to 169 (AAACAGARKK…EKSKKNKKKS (98 aa)) form an interaction with BCCIP region. The interval 78–222 (ARKKRRSPPR…DSGSLDSTIP (145 aa)) is disordered. Low complexity predominate over residues 93-106 (AAVPAAAPDDLALL). Residues 101–205 (DDLALLKNLR…ISHREKRQQR (105 aa)) form an interaction with RELA region. The span at 109 to 127 (LRSEEQKKKNRKKLSEKPK) shows a compositional bias: basic and acidic residues. Threonine 143 bears the Phosphothreonine mark. Residues 160-169 (EKSKKNKKKS) show a composition bias toward basic residues. At serine 180 the chain carries Phosphoserine. The segment covering 198–208 (HREKRQQRKRD) has biased composition (basic residues). Phosphoserine occurs at positions 216 and 251. Lysine 264 bears the N6-acetyllysine mark. Residues 280–582 (TVNGGGWNEK…KKKKKARRET (303 aa)) are disordered. Residues serine 298, serine 306, serine 308, serine 311, serine 323, serine 339, serine 344, and serine 369 each carry the phosphoserine modification. Residues 320–333 (SAWSQDTGDANTNG) are compositionally biased toward polar residues. Polar residues-rich tracts occupy residues 354-372 (EPVS…SRNQ) and 383-394 (NGLSSADPNSDW). A lung-homing for mammary tumors region spans residues 381 to 443 (GLNGLSSADP…EGALPTGKSK (63 aa)). Phosphoserine occurs at positions 415 and 426. Positions 421–434 (DDQKVSDDDKEKGE) are enriched in basic and acidic residues. A compositionally biased stretch (basic residues) spans 441–451 (KSKKKKKKKKK). Serine 457 is modified (phosphoserine). The residue at position 458 (threonine 458) is a Phosphothreonine. A phosphoserine mark is found at serine 478, serine 494, and serine 496. Composition is skewed to polar residues over residues 504–520 (KNSQ…STEP) and 549–568 (NTKQ…SWES). At serine 568 the chain carries Phosphoserine. Positions 571–582 (QIKKKKKARRET) are enriched in basic residues.

In terms of assembly, interacts with BCCIP, CREBBP/CBP and RELA/p65. As to expression, widely expressed with highest levels in muscle-dominating organs such as skeletal muscle, heart, tongue and small intestine and in endocrine glands such as thyroid and adrenal gland. Overexpressed in various cancers including breast, brain, prostate, melanoma and glioblastoma multiforme.

It localises to the endoplasmic reticulum membrane. It is found in the nucleus membrane. The protein resides in the cell junction. The protein localises to the tight junction. Its subcellular location is the nucleus. It localises to the nucleolus. It is found in the cytoplasm. The protein resides in the perinuclear region. Down-regulates SLC1A2/EAAT2 promoter activity when expressed ectopically. Activates the nuclear factor kappa-B (NF-kappa-B) transcription factor. Promotes anchorage-independent growth of immortalized melanocytes and astrocytes which is a key component in tumor cell expansion. Promotes lung metastasis and also has an effect on bone and brain metastasis, possibly by enhancing the seeding of tumor cells to the target organ endothelium. Induces chemoresistance. This chain is Protein LYRIC (MTDH), found in Homo sapiens (Human).